The primary structure comprises 394 residues: Phosphoglycerate kinase (394 aa).

Substrate is bound by residues 21–23, arginine 37, 60–63, arginine 119, and arginine 152; these read DFN and HLGR. Residues lysine 202, glutamate 324, and 350–353 contribute to the ATP site; that span reads GGDS.

It belongs to the phosphoglycerate kinase family. As to quaternary structure, monomer.

The protein resides in the cytoplasm. The catalysed reaction is (2R)-3-phosphoglycerate + ATP = (2R)-3-phospho-glyceroyl phosphate + ADP. Its pathway is carbohydrate degradation; glycolysis; pyruvate from D-glyceraldehyde 3-phosphate: step 2/5. This Carboxydothermus hydrogenoformans (strain ATCC BAA-161 / DSM 6008 / Z-2901) protein is Phosphoglycerate kinase.